The chain runs to 235 residues: Glycerol-3-phosphate acyltransferase (235 aa).

6 helical membrane-spanning segments follow: residues 4 to 24, 56 to 76, 94 to 114, 122 to 142, 152 to 172, and 191 to 211; these read LLAI…LVAG, VVTL…VAFF, LLAG…GFKG, AGML…IFLL, VASM…KYIF, and FHDS…LAIL.

This sequence belongs to the PlsY family. Probably interacts with PlsX.

The protein localises to the cell inner membrane. The enzyme catalyses an acyl phosphate + sn-glycerol 3-phosphate = a 1-acyl-sn-glycero-3-phosphate + phosphate. The protein operates within lipid metabolism; phospholipid metabolism. Catalyzes the transfer of an acyl group from acyl-phosphate (acyl-PO(4)) to glycerol-3-phosphate (G3P) to form lysophosphatidic acid (LPA). This enzyme utilizes acyl-phosphate as fatty acyl donor, but not acyl-CoA or acyl-ACP. This chain is Glycerol-3-phosphate acyltransferase, found in Pelodictyon phaeoclathratiforme (strain DSM 5477 / BU-1).